The following is a 249-amino-acid chain: tRNA (guanine-N(7)-)-methyltransferase (249 aa).

The disordered stretch occupies residues 1–24; sequence MHSIPADTGHTPSRAPAGNGSPPA. The S-adenosyl-L-methionine site is built by E81, E106, D133, and D156. D156 is a catalytic residue. A substrate-binding site is contributed by K160. Residues 162–167 are interaction with RNA; the sequence is RHNKRR. Residues D192 and 227–230 contribute to the substrate site; that span reads TKFE.

Belongs to the class I-like SAM-binding methyltransferase superfamily. TrmB family.

The catalysed reaction is guanosine(46) in tRNA + S-adenosyl-L-methionine = N(7)-methylguanosine(46) in tRNA + S-adenosyl-L-homocysteine. The protein operates within tRNA modification; N(7)-methylguanine-tRNA biosynthesis. Its function is as follows. Catalyzes the formation of N(7)-methylguanine at position 46 (m7G46) in tRNA. The protein is tRNA (guanine-N(7)-)-methyltransferase of Paracidovorax citrulli (strain AAC00-1) (Acidovorax citrulli).